Consider the following 779-residue polypeptide: Molybdenum cofactor sulfurase (779 aa).

The residue at position 247 (lysine 247) is an N6-(pyridoxal phosphate)lysine. The active site involves cysteine 409. Positions 624–779 constitute an MOSC domain; that stretch reads SQSLGLEGVR…LTCGDVIVVS (156 aa). Serine 732 is modified (phosphoserine).

This sequence belongs to the class-V pyridoxal-phosphate-dependent aminotransferase family. MOCOS subfamily. Pyridoxal 5'-phosphate is required as a cofactor.

The catalysed reaction is Mo-molybdopterin + L-cysteine + AH2 = thio-Mo-molybdopterin + L-alanine + A + H2O. Its pathway is cofactor biosynthesis; molybdopterin biosynthesis. In terms of biological role, sulfurates the molybdenum cofactor. Sulfation of molybdenum is essential for xanthine dehydrogenase (XDH) and aldehyde oxidase (ADO) enzymes in which molybdenum cofactor is liganded by 1 oxygen and 1 sulfur atom in active form. In Drosophila mojavensis (Fruit fly), this protein is Molybdenum cofactor sulfurase.